The sequence spans 1166 residues: ATP-dependent helicase/deoxyribonuclease subunit B (1166 aa).

The 278-residue stretch at 1–278 (MGAEFLVGRS…LNLDITYKEL (278 aa)) folds into the UvrD-like helicase ATP-binding domain. ATP contacts are provided by Ser10, Gly11, Lys14, Thr15, Lys16, Thr236, and Arg283. In terms of domain architecture, UvrD-like helicase C-terminal spans 281-586 (TERHTKTPEL…TFSLIPPALD (306 aa)). [4Fe-4S] cluster is bound by residues Cys801, Cys1121, Cys1124, and Cys1130.

Belongs to the helicase family. AddB/RexB type 1 subfamily. As to quaternary structure, heterodimer of AddA and AddB. At low magnesium concentrations there is no nuclease activity, but helicase activity is unaffected. serves as cofactor. Mg(2+) is required as a cofactor. It depends on [4Fe-4S] cluster as a cofactor.

Functionally, the heterodimer acts both as a highly processive, ATP-dependent DNA helicase and as an ATP-dependent single-stranded exonuclease, acting in both directions. Recognizes the B.subtilis Chi site (5'-AGCGG-3') which transforms the enzyme from a helicase which degrades both DNA strands to one with only 5' to 3' exonuclease activity. This generates a double-stranded DNA with a protruding 3'-terminated single-stranded tail suitable for the initiation of homologous recombination (Chi fragment). The AddB nuclease domain is not required for Chi fragment generation but for recognition of the Chi site; this subunit has 5' -&gt; 3' nuclease activity but no helicase activity. The helicase activity of isolated AddA acts on 3'-tailed substrate and requires AddB to bind to blunt-ended DNA. RecA thread formation during DNA double-strand break repair requires RecJ or AddAB. The polypeptide is ATP-dependent helicase/deoxyribonuclease subunit B (Bacillus subtilis (strain 168)).